Reading from the N-terminus, the 309-residue chain is Lipoyl synthase (309 aa).

The [4Fe-4S] cluster site is built by cysteine 56, cysteine 61, cysteine 67, cysteine 82, cysteine 86, cysteine 89, and serine 296. A Radical SAM core domain is found at 68–285 (FKRGTATFMI…RVAGLKMGFS (218 aa)).

The protein belongs to the radical SAM superfamily. Lipoyl synthase family. [4Fe-4S] cluster serves as cofactor.

It is found in the cytoplasm. It carries out the reaction [[Fe-S] cluster scaffold protein carrying a second [4Fe-4S](2+) cluster] + N(6)-octanoyl-L-lysyl-[protein] + 2 oxidized [2Fe-2S]-[ferredoxin] + 2 S-adenosyl-L-methionine + 4 H(+) = [[Fe-S] cluster scaffold protein] + N(6)-[(R)-dihydrolipoyl]-L-lysyl-[protein] + 4 Fe(3+) + 2 hydrogen sulfide + 2 5'-deoxyadenosine + 2 L-methionine + 2 reduced [2Fe-2S]-[ferredoxin]. It participates in protein modification; protein lipoylation via endogenous pathway; protein N(6)-(lipoyl)lysine from octanoyl-[acyl-carrier-protein]: step 2/2. In terms of biological role, catalyzes the radical-mediated insertion of two sulfur atoms into the C-6 and C-8 positions of the octanoyl moiety bound to the lipoyl domains of lipoate-dependent enzymes, thereby converting the octanoylated domains into lipoylated derivatives. The sequence is that of Lipoyl synthase from Syntrophotalea carbinolica (strain DSM 2380 / NBRC 103641 / GraBd1) (Pelobacter carbinolicus).